A 279-amino-acid chain; its full sequence is ATP synthase gamma chain (279 aa).

This sequence belongs to the ATPase gamma chain family. F-type ATPases have 2 components, CF(1) - the catalytic core - and CF(0) - the membrane proton channel. CF(1) has five subunits: alpha(3), beta(3), gamma(1), delta(1), epsilon(1). CF(0) has three main subunits: a, b and c.

The protein resides in the cell membrane. Produces ATP from ADP in the presence of a proton gradient across the membrane. The gamma chain is believed to be important in regulating ATPase activity and the flow of protons through the CF(0) complex. In Mycoplasma pneumoniae (strain ATCC 29342 / M129 / Subtype 1) (Mycoplasmoides pneumoniae), this protein is ATP synthase gamma chain.